Here is a 186-residue protein sequence, read N- to C-terminus: Phosphoheptose isomerase (186 aa).

The SIS domain occupies 33–186; sequence LCECLKKGGK…TLCQIIDEGF (154 aa). 48-50 is a substrate binding site; it reads NGG. The Zn(2+) site is built by H57 and E61. Substrate-binding positions include E61, 90-91, 116-118, S121, and Q168; these read ND and STS. The Zn(2+) site is built by Q168 and H176.

It belongs to the SIS family. GmhA subfamily. Homotetramer. It depends on Zn(2+) as a cofactor.

The protein localises to the cytoplasm. The enzyme catalyses 2 D-sedoheptulose 7-phosphate = D-glycero-alpha-D-manno-heptose 7-phosphate + D-glycero-beta-D-manno-heptose 7-phosphate. It functions in the pathway carbohydrate biosynthesis; D-glycero-D-manno-heptose 7-phosphate biosynthesis; D-glycero-alpha-D-manno-heptose 7-phosphate and D-glycero-beta-D-manno-heptose 7-phosphate from sedoheptulose 7-phosphate: step 1/1. In terms of biological role, catalyzes the isomerization of sedoheptulose 7-phosphate in D-glycero-D-manno-heptose 7-phosphate. The polypeptide is Phosphoheptose isomerase (Campylobacter jejuni subsp. jejuni serotype O:6 (strain 81116 / NCTC 11828)).